The chain runs to 149 residues: Calmodulin (149 aa).

A2 bears the N-acetylalanine mark. EF-hand domains follow at residues 8-43 (EQIA…LGQN), 44-79 (PTEA…KMKD), 81-116 (DSEE…LGEK), and 117-149 (LTDE…MTAK). Residues D21, D23, D25, T27, E32, D57, D59, N61, T63, E68, D94, D96, N98, Y100, and E105 each contribute to the Ca(2+) site. K116 is modified (N6,N6,N6-trimethyllysine). Positions 130, 132, 134, 136, and 141 each coordinate Ca(2+).

It belongs to the calmodulin family.

Functionally, calmodulin acts as part of a calcium signal transduction pathway by mediating the control of a large number of enzymes, ion channels, aquaporins and other proteins through calcium-binding. Calcium-binding is required for the activation of calmodulin. Among the enzymes to be stimulated by the calmodulin-calcium complex are a number of protein kinases, such as myosin light-chain kinases and calmodulin-dependent protein kinase type II (CaMK2), and phosphatases. This Oreochromis mossambicus (Mozambique tilapia) protein is Calmodulin (calm).